A 938-amino-acid polypeptide reads, in one-letter code: Isoleucine--tRNA ligase (938 aa).

The short motif at 58–68 (PYANGNIHIGH) is the 'HIGH' region element. Glu-561 contributes to the L-isoleucyl-5'-AMP binding site. Residues 602–606 (KMSKS) carry the 'KMSKS' region motif. Position 605 (Lys-605) interacts with ATP. Residues Cys-901, Cys-904, Cys-921, and Cys-924 each contribute to the Zn(2+) site.

It belongs to the class-I aminoacyl-tRNA synthetase family. IleS type 1 subfamily. Monomer. Zn(2+) serves as cofactor.

The protein resides in the cytoplasm. The enzyme catalyses tRNA(Ile) + L-isoleucine + ATP = L-isoleucyl-tRNA(Ile) + AMP + diphosphate. Functionally, catalyzes the attachment of isoleucine to tRNA(Ile). As IleRS can inadvertently accommodate and process structurally similar amino acids such as valine, to avoid such errors it has two additional distinct tRNA(Ile)-dependent editing activities. One activity is designated as 'pretransfer' editing and involves the hydrolysis of activated Val-AMP. The other activity is designated 'posttransfer' editing and involves deacylation of mischarged Val-tRNA(Ile). In Yersinia pestis bv. Antiqua (strain Angola), this protein is Isoleucine--tRNA ligase.